Here is a 392-residue protein sequence, read N- to C-terminus: Phosphopentomutase (392 aa).

Positions 10, 282, 287, 323, 324, and 335 each coordinate Mn(2+).

This sequence belongs to the phosphopentomutase family. The cofactor is Mn(2+).

It is found in the cytoplasm. The catalysed reaction is 2-deoxy-alpha-D-ribose 1-phosphate = 2-deoxy-D-ribose 5-phosphate. The enzyme catalyses alpha-D-ribose 1-phosphate = D-ribose 5-phosphate. It functions in the pathway carbohydrate degradation; 2-deoxy-D-ribose 1-phosphate degradation; D-glyceraldehyde 3-phosphate and acetaldehyde from 2-deoxy-alpha-D-ribose 1-phosphate: step 1/2. In terms of biological role, isomerase that catalyzes the conversion of deoxy-ribose 1-phosphate (dRib-1-P) and ribose 1-phosphate (Rib-1-P) to deoxy-ribose 5-phosphate (dRib-5-P) and ribose 5-phosphate (Rib-5-P), respectively. This is Phosphopentomutase from Dictyoglomus thermophilum (strain ATCC 35947 / DSM 3960 / H-6-12).